A 100-amino-acid polypeptide reads, in one-letter code: Acylphosphatase (100 aa).

One can recognise an Acylphosphatase-like domain in the interval 14–100 (RLSAWVHGHV…RGDLTGFEER (87 aa)). Active-site residues include Arg-29 and Asn-47.

It belongs to the acylphosphatase family.

It catalyses the reaction an acyl phosphate + H2O = a carboxylate + phosphate + H(+). In Nocardia farcinica (strain IFM 10152), this protein is Acylphosphatase (acyP).